Here is a 232-residue protein sequence, read N- to C-terminus: Enolase-phosphatase E1 (232 aa).

Belongs to the HAD-like hydrolase superfamily. MasA/MtnC family. As to quaternary structure, monomer. Mg(2+) is required as a cofactor.

It carries out the reaction 5-methylsulfanyl-2,3-dioxopentyl phosphate + H2O = 1,2-dihydroxy-5-(methylsulfanyl)pent-1-en-3-one + phosphate. It participates in amino-acid biosynthesis; L-methionine biosynthesis via salvage pathway; L-methionine from S-methyl-5-thio-alpha-D-ribose 1-phosphate: step 3/6. Its pathway is amino-acid biosynthesis; L-methionine biosynthesis via salvage pathway; L-methionine from S-methyl-5-thio-alpha-D-ribose 1-phosphate: step 4/6. Functionally, bifunctional enzyme that catalyzes the enolization of 2,3-diketo-5-methylthiopentyl-1-phosphate (DK-MTP-1-P) into the intermediate 2-hydroxy-3-keto-5-methylthiopentenyl-1-phosphate (HK-MTPenyl-1-P), which is then dephosphorylated to form the acireductone 1,2-dihydroxy-3-keto-5-methylthiopentene (DHK-MTPene). The protein is Enolase-phosphatase E1 of Xanthomonas campestris pv. campestris (strain 8004).